Here is a 217-residue protein sequence, read N- to C-terminus: HTH-type transcriptional regulator EthR (217 aa).

The segment at 1 to 22 (MTTASQTRTPRGRRSARPSGDD) is disordered. The region spanning 21-81 (DDREAAILAT…SLIDPLIKRA (61 aa)) is the HTH tetR-type domain. The H-T-H motif DNA-binding region spans 44–63 (SVDDLAKGAGISRPTFYFYF).

In terms of assembly, homodimer.

In terms of biological role, involved in the repression of teh monooxygenase EthA which is responsible of the formation of the active metabolite of ethionamide (ETH). The chain is HTH-type transcriptional regulator EthR (ethR) from Mycolicibacterium smegmatis (strain ATCC 700084 / mc(2)155) (Mycobacterium smegmatis).